The chain runs to 82 residues: Small ribosomal subunit protein bS16 (82 aa).

It belongs to the bacterial ribosomal protein bS16 family.

In Enterobacter sp. (strain 638), this protein is Small ribosomal subunit protein bS16.